Reading from the N-terminus, the 146-residue chain is UPF0310 protein YdcG (146 aa).

This sequence belongs to the UPF0310 family.

The protein is UPF0310 protein YdcG (ydcG) of Bacillus subtilis (strain 168).